We begin with the raw amino-acid sequence, 399 residues long: Vitamin K-dependent protein Z (399 aa).

Residues 1-22 (MAGCILLLRGFILTLILHQVEL) form the signal peptide. A propeptide spanning residues 23–40 (SVFLPAPKANNVLRRWRR) is cleaved from the precursor. The Gla domain occupies 41 to 86 (GSSYFLEEIFQGNLEKECYEEVCNYEEAREVFENDVITDEFWRQYG). Glutamate 47, glutamate 48, glutamate 55, glutamate 57, glutamate 60, glutamate 61, glutamate 66, glutamate 67, glutamate 70, glutamate 73, and glutamate 80 each carry 4-carboxyglutamate. Cysteine 58 and cysteine 63 form a disulfide bridge. 2 EGF-like domains span residues 87–123 (GGSPCVSQPCLNNGTCEDHIRSYSCTCSPGYEGKTCA) and 125–166 (AKNE…KSCG). Disulfide bonds link cysteine 91-cysteine 102, cysteine 96-cysteine 111, cysteine 113-cysteine 122, cysteine 129-cysteine 141, cysteine 137-cysteine 150, cysteine 152-cysteine 165, and cysteine 208-cysteine 224. Asparagine 99 carries an N-linked (GlcNAc...) asparagine glycan. Aspartate 104 carries the (3R)-3-hydroxyaspartate modification. Residues 172-399 (ACGALTSEHI…YSMWFKQIMK (228 aa)) enclose the Peptidase S1 domain. Residues asparagine 230, asparagine 305, and asparagine 331 are each glycosylated (N-linked (GlcNAc...) asparagine). A disulfide bond links cysteine 326 and cysteine 340.

The protein belongs to the peptidase S1 family. Post-translationally, the iron and 2-oxoglutarate dependent 3-hydroxylation of aspartate and asparagine is (R) stereospecific within EGF domains. In terms of tissue distribution, plasma.

It localises to the secreted. Its function is as follows. Appears to assist hemostasis by binding thrombin and promoting its association with phospholipid vesicles. Inhibits activity of the coagulation protease factor Xa in the presence of SERPINA10, calcium and phospholipids. This chain is Vitamin K-dependent protein Z (Proz), found in Mus musculus (Mouse).